A 93-amino-acid polypeptide reads, in one-letter code: Alpha-defensin 13 (93 aa).

Positions 1 to 19 are cleaved as a signal peptide; the sequence is MKTLVLLSALVLLAFQVQA. Positions 20 to 58 are excised as a propeptide; sequence DPIQNTDEETKTEEQPGEEDQAVSVSFGDPEGTSLQEES. The segment at 22 to 54 is disordered; it reads IQNTDEETKTEEQPGEEDQAVSVSFGDPEGTSL. Cystine bridges form between C64-C92, C66-C81, and C71-C91.

Belongs to the alpha-defensin family. As to expression, paneth cells of the small bowel.

The protein localises to the secreted. In terms of biological role, probably contributes to the antimicrobial barrier function of the small bowel mucosa. The protein is Alpha-defensin 13 (Defa13) of Mus musculus (Mouse).